Reading from the N-terminus, the 142-residue chain is Endoribonuclease YbeY (142 aa).

Zn(2+)-binding residues include H107, H111, and D117.

The protein belongs to the endoribonuclease YbeY family. Zn(2+) serves as cofactor.

Its subcellular location is the cytoplasm. Single strand-specific metallo-endoribonuclease involved in late-stage 70S ribosome quality control and in maturation of the 3' terminus of the 16S rRNA. The protein is Endoribonuclease YbeY of Parabacteroides distasonis (strain ATCC 8503 / DSM 20701 / CIP 104284 / JCM 5825 / NCTC 11152).